Reading from the N-terminus, the 154-residue chain is Small ribosomal subunit protein uS13 (154 aa).

Belongs to the universal ribosomal protein uS13 family.

It is found in the cytoplasm. In terms of biological role, located at the top of the head of the 40S subunit, it contacts several helices of the 18S rRNA. The chain is Small ribosomal subunit protein uS13 (rps18) from Dictyostelium discoideum (Social amoeba).